Here is a 127-residue protein sequence, read N- to C-terminus: Large ribosomal subunit protein eL8 (127 aa).

It belongs to the eukaryotic ribosomal protein eL8 family. Part of the 50S ribosomal subunit. Probably part of the RNase P complex.

The protein localises to the cytoplasm. Its function is as follows. Multifunctional RNA-binding protein that recognizes the K-turn motif in ribosomal RNA, the RNA component of RNase P, box H/ACA, box C/D and box C'/D' sRNAs. This is Large ribosomal subunit protein eL8 from Saccharolobus islandicus (strain Y.N.15.51 / Yellowstone #2) (Sulfolobus islandicus).